A 428-amino-acid polypeptide reads, in one-letter code: Glutamate-1-semialdehyde 2,1-aminomutase 1 (428 aa).

The residue at position 268 (Lys268) is an N6-(pyridoxal phosphate)lysine.

Belongs to the class-III pyridoxal-phosphate-dependent aminotransferase family. HemL subfamily. Homodimer. Requires pyridoxal 5'-phosphate as cofactor.

The protein resides in the cytoplasm. It catalyses the reaction (S)-4-amino-5-oxopentanoate = 5-aminolevulinate. It participates in porphyrin-containing compound metabolism; protoporphyrin-IX biosynthesis; 5-aminolevulinate from L-glutamyl-tRNA(Glu): step 2/2. The polypeptide is Glutamate-1-semialdehyde 2,1-aminomutase 1 (Geobacillus thermodenitrificans (strain NG80-2)).